The chain runs to 198 residues: Probable GTP-binding protein EngB (198 aa).

Positions 21–195 constitute an EngB-type G domain; the sequence is NFSEVAFLGR…EDIIINQTLG (175 aa). GTP contacts are provided by residues 29-36, 56-60, 81-84, 151-154, and 174-176; these read GRSNVGKS, GKTQL, DLPG, TKCD, and VSN. Residues Ser36 and Thr58 each contribute to the Mg(2+) site.

It belongs to the TRAFAC class TrmE-Era-EngA-EngB-Septin-like GTPase superfamily. EngB GTPase family. Requires Mg(2+) as cofactor.

Its function is as follows. Necessary for normal cell division and for the maintenance of normal septation. The polypeptide is Probable GTP-binding protein EngB (Campylobacter jejuni subsp. jejuni serotype O:23/36 (strain 81-176)).